The chain runs to 127 residues: Glycine cleavage system H protein (127 aa).

Residues 24 to 106 enclose the Lipoyl-binding domain; that stretch reads VVTVGVTFHA…YGAGWFFKLK (83 aa). The residue at position 65 (Lys-65) is an N6-lipoyllysine.

Belongs to the GcvH family. The glycine cleavage system is composed of four proteins: P, T, L and H. (R)-lipoate serves as cofactor.

In terms of biological role, the glycine cleavage system catalyzes the degradation of glycine. The H protein shuttles the methylamine group of glycine from the P protein to the T protein. This chain is Glycine cleavage system H protein, found in Laribacter hongkongensis (strain HLHK9).